The primary structure comprises 319 residues: Protease HtpX homolog (319 aa).

2 helical membrane-spanning segments follow: residues 6 to 26 and 28 to 48; these read TAMLLAFMTVLFMAVGYVIGG and GGMMIALVIAAGMNFFSYWNS. Histidine 130 serves as a coordination point for Zn(2+). The active site involves glutamate 131. Position 134 (histidine 134) interacts with Zn(2+). 2 helical membrane-spanning segments follow: residues 145 to 165 and 172 to 192; these read MTATLAGAISMLGNFAFFFGG and PLGFIGVLIAMIVAPLAAALV. Zn(2+) is bound at residue glutamate 201. A disordered region spans residues 280–319; that stretch reads EMSTGSTAPVRPDNAVRKSRSVPRTGWGRGGSEPPKGPWS.

Belongs to the peptidase M48B family. The cofactor is Zn(2+).

Its subcellular location is the cell inner membrane. The chain is Protease HtpX homolog from Sinorhizobium medicae (strain WSM419) (Ensifer medicae).